The chain runs to 487 residues: Cysteine--tRNA ligase (487 aa).

Cys-30 is a Zn(2+) binding site. The 'HIGH' region motif lies at 32–42 (PTVYGHAHLGH). 3 residues coordinate Zn(2+): Cys-226, His-251, and Glu-255. Positions 283 to 287 (KMGKS) match the 'KMSKS' region motif. Lys-286 serves as a coordination point for ATP.

The protein belongs to the class-I aminoacyl-tRNA synthetase family. In terms of assembly, monomer. The cofactor is Zn(2+).

Its subcellular location is the cytoplasm. It catalyses the reaction tRNA(Cys) + L-cysteine + ATP = L-cysteinyl-tRNA(Cys) + AMP + diphosphate. In Chlorobaculum tepidum (strain ATCC 49652 / DSM 12025 / NBRC 103806 / TLS) (Chlorobium tepidum), this protein is Cysteine--tRNA ligase (cysS).